Reading from the N-terminus, the 170-residue chain is Probable inosine/xanthosine triphosphatase (170 aa).

Position 31 (Glu-31) interacts with Mg(2+).

The protein belongs to the YjjX NTPase family. Homodimer. The cofactor is Mg(2+). Mn(2+) serves as cofactor.

It carries out the reaction XTP + H2O = XDP + phosphate + H(+). It catalyses the reaction ITP + H2O = IDP + phosphate + H(+). In terms of biological role, phosphatase that hydrolyzes non-canonical purine nucleotides such as XTP and ITP to their respective diphosphate derivatives. Probably excludes non-canonical purines from DNA/RNA precursor pool, thus preventing their incorporation into DNA/RNA and avoiding chromosomal lesions. The sequence is that of Probable inosine/xanthosine triphosphatase from Oceanobacillus iheyensis (strain DSM 14371 / CIP 107618 / JCM 11309 / KCTC 3954 / HTE831).